Reading from the N-terminus, the 3550-residue chain is Zinc finger homeobox protein 4 (3550 aa).

An N-acetylmethionine modification is found at M1. 3 disordered regions span residues M1–D54, H426–N479, and T521–P614. The segment covering I9 to K20 has biased composition (polar residues). 2 stretches are compositionally biased toward basic and acidic residues: residues E39–D54 and K433–T451. The span at E467–N479 shows a compositional bias: acidic residues. 2 stretches are compositionally biased toward polar residues: residues G542–S553 and R566–T576. 3 consecutive C2H2-type zinc fingers follow at residues I611 to H634, L642 to H665, and F697 to H721. Positions H739 to P763 are disordered. The span at P742–G752 shows a compositional bias: polar residues. 4 C2H2-type zinc fingers span residues R765 to E787, Y915 to H939, L971 to H993, and Y1019 to H1043. The segment at K1100–P1142 is disordered. Positions K1125–P1142 are enriched in basic and acidic residues. A Glycyl lysine isopeptide (Lys-Gly) (interchain with G-Cter in SUMO2) cross-link involves residue K1165. C2H2-type zinc fingers lie at residues Y1188 to H1211 and I1217 to H1240. The tract at residues A1271–V1339 is disordered. Residues V1297–V1326 show a composition bias toward basic and acidic residues. K1315 participates in a covalent cross-link: Glycyl lysine isopeptide (Lys-Gly) (interchain with G-Cter in SUMO2). 2 C2H2-type zinc fingers span residues Y1368–H1390 and T1396–H1419. The interval E1467–L1492 is disordered. The C2H2-type 12 zinc finger occupies Y1512–H1538. A Glycyl lysine isopeptide (Lys-Gly) (interchain with G-Cter in SUMO2) cross-link involves residue K1562. The segment at Y1564 to H1588 adopts a C2H2-type 13 zinc-finger fold. A disordered region spans residues P1779–G1873. A compositionally biased stretch (low complexity) spans Q1792 to Q1808. K1805 is covalently cross-linked (Glycyl lysine isopeptide (Lys-Gly) (interchain with G-Cter in SUMO2)). Basic and acidic residues predominate over residues P1823–S1860. The C2H2-type 14 zinc-finger motif lies at L1916–H1939. A disordered region spans residues K1984 to Q2006. The segment covering Q1994–A2003 has biased composition (pro residues). 2 DNA-binding regions (homeobox) span residues F2069 to N2128 and K2166 to Y2225. The C2H2-type 15; degenerate zinc finger occupies Y2252–Y2276. Polar residues predominate over residues T2318–L2331. The segment at T2318 to L2412 is disordered. The segment covering P2337–Q2355 has biased composition (basic and acidic residues). Positions S2356–E2376 are enriched in polar residues. A compositionally biased stretch (pro residues) spans P2383–Q2392. A compositionally biased stretch (polar residues) spans S2401–L2412. The C2H2-type 16 zinc finger occupies Y2430 to H2452. The span at G2490–P2508 shows a compositional bias: polar residues. The segment at G2490–L2545 is disordered. The span at R2517–R2541 shows a compositional bias: basic and acidic residues. Positions D2542 to Q2601 form a DNA-binding region, homeobox 3. A C2H2-type 17 zinc finger spans residues K2612–H2635. Position 2645 is a phosphoserine (S2645). Disordered stretches follow at residues A2746–P2791 and H2810–K2866. Positions L2781 to P2791 are enriched in polar residues. Over residues F2811–Q2820 the composition is skewed to basic and acidic residues. Low complexity predominate over residues P2843 to F2855. Residues H2865–K2924 constitute a DNA-binding region (homeobox 4). The segment at P2943 to H2967 adopts a C2H2-type 18 zinc-finger fold. Disordered stretches follow at residues P3051 to I3156 and Q3261 to D3318. Over residues P3058 to G3068 the composition is skewed to polar residues. Residues P3075–S3088 are compositionally biased toward low complexity. Over residues T3097–S3109 the composition is skewed to pro residues. Residues I3136 to I3156 are compositionally biased toward basic and acidic residues. Residue K3137 forms a Glycyl lysine isopeptide (Lys-Gly) (interchain with G-Cter in SUMO2) linkage. Residues A3248 to K3277 are a coiled coil. Positions Q3261–Q3276 are enriched in low complexity. Over residues S3298 to D3318 the composition is skewed to basic and acidic residues. The segment at F3337–Y3361 adopts a C2H2-type 19; degenerate zinc-finger fold. A C2H2-type 20 zinc finger spans residues Y3381–H3405. The tract at residues L3424 to S3445 is disordered. A compositionally biased stretch (low complexity) spans T3435–S3445.

Belongs to the krueppel C2H2-type zinc-finger protein family. As to expression, expressed in brain, heart, lung, muscle and small intestine. No expression detected in undifferentiated P19 cells, however, expression was seen following retinoic acid treatment to induce neuronal differentiation. Expressed in undifferentiated C2C12 cells, following induction of muscle differentiation in a low-serum medium, expression levels were decreased.

The protein resides in the nucleus. Its function is as follows. May play a role in neural and muscle differentiation. May be involved in transcriptional regulation. The sequence is that of Zinc finger homeobox protein 4 (Zfhx4) from Mus musculus (Mouse).